The chain runs to 710 residues: Dendrin (710 aa).

4 disordered regions span residues 1–22, 62–195, 213–274, and 324–375; these read MLDGPLFSEGPDSPRELQDEES, WARG…PWGG, AGTA…KRLD, and GLNS…GKEG. Residues 103-134 are a coiled coil; the sequence is AEVRAREQEKRKAASQEREAKETERKRRKAGG. The segment covering 105–127 has biased composition (basic and acidic residues); sequence VRAREQEKRKAASQEREAKETER. Positions 113–131 are nuclear localization; it reads RKAASQEREAKETERKRRK. The segment at 186–236 is interaction with MAGI2; it reads GVAWAGPWGGRRPGPPSYEAHLLLRGSAGTAPRRRWDRPPPYVAPPSYEGP. Positions 265 to 274 are enriched in basic and acidic residues; it reads EGGRTKKRLD. Positions 341–435 are interaction with ACTN1; sequence PGTDAALSRS…LEVWKVTRRA (95 aa). Over residues 360–370 the composition is skewed to basic residues; sequence PRSRQHLRGSR. S388 bears the Phosphoserine mark. Disordered regions lie at residues 390-422, 469-508, and 521-710; these read KKPPVRHSQTLPRPWAPGGTGWKESLGQREGAE, PRTQQGQLVPSGESCSVSDSLSQPKPCHEEEGEGAAANPS, and NQPS…RERE. The tract at residues 407–708 is interaction with CD2AP and NPHS1; the sequence is GGTGWKESLG…TRKTPQGNRE (302 aa). Over residues 469 to 491 the composition is skewed to polar residues; it reads PRTQQGQLVPSGESCSVSDSLSQ. A compositionally biased stretch (basic and acidic residues) spans 693 to 710; the sequence is GFIREDTRKTPQGNRERE.

Forms a ternary complex with MAGI2 and SH3KBP1; recruits DDN to the cytoplasm. Interacts with MAGI1. Interacts with ACTN1 and may interact with WWC1. Interacts with the podocyte slit diaphragm proteins CD2AP, NPHS1 and NPHS2; the interaction with CD2AP and NPHS1 is direct. In terms of tissue distribution, two forms of 81 kDa and 89 kDa are expressed in brain. The 81 kDa form is the only one found in kidney podocytes.

It localises to the cell projection. The protein localises to the dendritic spine membrane. It is found in the cytoplasm. The protein resides in the endoplasmic reticulum membrane. Its subcellular location is the perikaryon. It localises to the nucleus. Its function is as follows. Promotes apoptosis of kidney glomerular podocytes. Podocytes are highly specialized cells essential to the ultrafiltration of blood, resulting in the extraction of urine and the retention of protein. This is Dendrin (Ddn) from Mus musculus (Mouse).